An 837-amino-acid chain; its full sequence is MKLNRRDFIKANAAAAAISAAGLSVPGAAVAQGKDEIRWDKAACRFCGTGCGVLVGTQDGRVVATQGDPDAPVNRGLNCIKGYFLSKIMYGADRLKTPMLRMKDGKYDKNGEFTPISWTKAFDIMEEKAKATMKAKGPNGLAMFGSGQWTIWEGYAASKLMKAGFRTNNLDPNARHCMASAVAGFMRTFGIDEPMGCYDDIEHADAFVLWGSNMAEMHPILWTRITDRKLSNKGVKVAVLSTFEHRSYELADIPMIFTPQTDLAILNYIANYIIQNGKVNQAFVDKNVNFKKSATDIGYGLRPTHALEKNATSNGYPDADGKPKGDTGKSDPITFDEFKKFVSEYTVEKVSKLSGVAEKDLKALAELYADPKVKVISFWTMGFNQHTRGTWANNLCYNIHLLTGKISEPGNSPFSLTGQPSACGTAREVGTFSHRLPADMVVTNPEHRKHTEELWGLPEGTIPDKVGYHAVAMARALKDGKVNFYWQQCNNNMQAGPNINEELYPGWRKPENFIVVSDPYPTVSAMAADLILPTAMWVEKEGAYGNAERRTQFWRQQVKAPGEARSDLWQLMEFSKRFKVEEVWPAELVAKAPKLKGKTLFDVLYANGVVNKYKLNETAAGFDNDDSKLIGFYIQKGLFEEYASFGRGHGHDLAPFDSYHQARGLRWPVVGGKETLWRFREGYDPYVKKGEGVKFYGHKDGKAVIFALPYQPPAESPDKEFDMWLSTGRVLEHWHTGTMTRRVPELYKAFPDAVVFMHPDDAKARGLQRGMEVKVASRRGEIQLRVETRGRNKPPRGLVFIPFFDAGRLVNKLTLDATCPISKETDYKKCAVKVTKV.

The segment at residues 1-31 is a signal peptide (tat-type signal); the sequence is MKLNRRDFIKANAAAAAISAAGLSVPGAAVA. The 4Fe-4S Mo/W bis-MGD-type domain occupies 37-93; it reads IRWDKAACRFCGTGCGVLVGTQDGRVVATQGDPDAPVNRGLNCIKGYFLSKIMYGAD. The [4Fe-4S] cluster site is built by C44, C47, C51, and C79. Mo-bis(molybdopterin guanine dinucleotide) is bound by residues K81, Q148, N173, C177, 210-217, 241-245, and 260-262; these read WGSNMAEM, STFEH, and QTD. Residues 308 to 329 are disordered; that stretch reads EKNATSNGYPDADGKPKGDTGK. The span at 319–329 shows a compositional bias: basic and acidic residues; sequence ADGKPKGDTGK. Residues M381, Q385, N491, 517–518, K540, D567, and 727–736 each bind Mo-bis(molybdopterin guanine dinucleotide); these read SD and TGRVLEHWHT. F803 lines the substrate pocket. The Mo-bis(molybdopterin guanine dinucleotide) site is built by N811 and K828.

This sequence belongs to the prokaryotic molybdopterin-containing oxidoreductase family. NasA/NapA/NarB subfamily. Component of the periplasmic nitrate reductase NapAB complex composed of NapA and NapB. [4Fe-4S] cluster is required as a cofactor. Requires Mo-bis(molybdopterin guanine dinucleotide) as cofactor. In terms of processing, predicted to be exported by the Tat system. The position of the signal peptide cleavage has not been experimentally proven.

It localises to the periplasm. The catalysed reaction is 2 Fe(II)-[cytochrome] + nitrate + 2 H(+) = 2 Fe(III)-[cytochrome] + nitrite + H2O. Its function is as follows. Catalytic subunit of the periplasmic nitrate reductase complex NapAB. Receives electrons from NapB and catalyzes the reduction of nitrate to nitrite. This is Periplasmic nitrate reductase from Dechloromonas aromatica (strain RCB).